A 98-amino-acid polypeptide reads, in one-letter code: Essential MCU regulator, mitochondrial (98 aa).

The helical transmembrane segment at 52–72 threads the bilayer; it reads ITPFGLFGIIATVIPGLLIGA.

Belongs to the SMDT1/EMRE family.

The protein resides in the mitochondrion inner membrane. Its function is as follows. Essential regulatory subunit of the mitochondrial calcium uniporter (mcu) channel, a protein that mediates calcium uptake into mitochondria. This chain is Essential MCU regulator, mitochondrial, found in Anopheles gambiae (African malaria mosquito).